The primary structure comprises 519 residues: Cytochrome P450 monooxygenase FPY7 (519 aa).

A helical transmembrane segment spans residues S12 to T34. C465 is a binding site for heme.

The protein belongs to the cytochrome P450 family. Heme is required as a cofactor.

It is found in the membrane. It participates in secondary metabolite biosynthesis. Functionally, cytochrome P450 monooxygenase; part of the gene cluster that mediates the biosynthesis of the gamma-pyrones fusapyrone (FPY) and deoxyfusapyrone (dFPY). FPY is an undecaketide and thus likely synthesized by the polyketide synthase FPY1 from acetyl-CoA functioning as starter unit and the addition of 10 malonyl-CoA extender units by successive Claisen-condensations. Next to this, FPY shares some rare features: C-glycosylated 4-deoxyglucose at C-3, a gem-dimethyl group at C-13, and an alpha-beta to beta-gamma double bond shift at C-20. During FPY biosynthesis mono-C-methyl groups are transferred to the tetra-, penta-, hexa- and heptaketide, while two C-methyl groups are transferred to the nonaketide, suggesting that the CMet domain is programmed to selectively catalyze two successive C-alpha-methylation reactions of the nonaketide, while other alpha-carbons are non- or mono-methylated only. While the origin of the 4'-deoxyglucose moiety remains opaque, its transfer to C-3 is most likely mediated by the C-glycosyltransferase FPY2. Next to this, the hydroxyl group present at C-33 and discriminating between FPY and dFPY, is likely to be installed by the cytochrome P450 monooxygenase FPY7. No putative function can be predicted for the remaining genes FPY3-FPY6. This Fusarium mangiferae (Mango malformation disease fungus) protein is Cytochrome P450 monooxygenase FPY7.